Reading from the N-terminus, the 290-residue chain is Agmatinase (290 aa).

6 residues coordinate Mn(2+): His-112, Asp-135, His-137, Asp-139, Asp-216, and Asp-218.

Belongs to the arginase family. Agmatinase subfamily. It depends on Mn(2+) as a cofactor.

The enzyme catalyses agmatine + H2O = urea + putrescine. It functions in the pathway amine and polyamine biosynthesis; putrescine biosynthesis via agmatine pathway; putrescine from agmatine: step 1/1. Catalyzes the formation of putrescine from agmatine. In Bacillus cereus (strain ATCC 14579 / DSM 31 / CCUG 7414 / JCM 2152 / NBRC 15305 / NCIMB 9373 / NCTC 2599 / NRRL B-3711), this protein is Agmatinase (speB).